A 261-amino-acid polypeptide reads, in one-letter code: Carnitinyl-CoA dehydratase (261 aa).

Catalysis depends on Glu-111, which acts as the Nucleophile. Glu-131 acts as the Proton acceptor in catalysis.

This sequence belongs to the enoyl-CoA hydratase/isomerase family.

It carries out the reaction (R)-carnitinyl-CoA = crotonobetainyl-CoA + H2O. The protein operates within amine and polyamine metabolism; carnitine metabolism. Catalyzes the reversible dehydration of L-carnitinyl-CoA to crotonobetainyl-CoA. This Salmonella enteritidis PT4 (strain P125109) protein is Carnitinyl-CoA dehydratase.